Reading from the N-terminus, the 198-residue chain is Probable thymidylate kinase (198 aa).

9-16 contacts ATP; the sequence is GIDGSGKT.

This sequence belongs to the thymidylate kinase family.

The catalysed reaction is dTMP + ATP = dTDP + ADP. This chain is Probable thymidylate kinase, found in Methanococcus vannielii (strain ATCC 35089 / DSM 1224 / JCM 13029 / OCM 148 / SB).